Reading from the N-terminus, the 76-residue chain is Beta-defensin 121 (76 aa).

A signal peptide spans 1 to 15 (MKLLLLLLTVTLLLA). Disulfide bonds link cysteine 23–cysteine 50, cysteine 30–cysteine 44, and cysteine 34–cysteine 51.

Belongs to the beta-defensin family. In terms of tissue distribution, abundant expression in the male reproductive tract only.

The protein resides in the secreted. Has antibacterial activity. The sequence is that of Beta-defensin 121 (DEFB121) from Macaca mulatta (Rhesus macaque).